The sequence spans 640 residues: Insulin-like growth factor 1 receptor (640 aa).

2 Fibronectin type-III domains span residues 5–101 and 107–200; these read VPRP…TMPA and IPGP…VQAK. Residues 14-208 are Extracellular-facing; that stretch reads EVMQIANTTM…AKTTYENFIH (195 aa). 5 N-linked (GlcNAc...) asparagine glycosylation sites follow: N20, N29, N37, N173, and N186. The chain crosses the membrane as a helical span at residues 209-232; the sequence is LMIALPIAVLLIVGGLVIMLYVFH. The Cytoplasmic portion of the chain corresponds to 233–640; the sequence is RKRNSSRLGN…ALPLPQSSTC (408 aa). The IRS1- and SHC1-binding signature appears at 250–253; sequence NPEY. A Phosphotyrosine modification is found at Y253. The 276-residue stretch at 272-547 folds into the Protein kinase domain; sequence ITMSRELGQG…SVKDEMEAGF (276 aa). ATP-binding positions include 278–286 and K306; that span reads LGQGSFGMV. The active-site Proton acceptor is D408. Residues Y434, Y438, and Y439 each carry the phosphotyrosine; by autocatalysis modification. Residues K441 and K444 each participate in a glycyl lysine isopeptide (Lys-Gly) (interchain with G-Cter in ubiquitin) cross-link. A Phosphoserine; by GSK3-beta modification is found at S551. S555 is subject to Phosphoserine. Residues 555 to 640 form a disordered region; the sequence is SEENKPPEPE…ALPLPQSSTC (86 aa). A compositionally biased stretch (acidic residues) spans 563-572; the sequence is PEELDLEPEN. Over residues 573 to 589 the composition is skewed to low complexity; sequence MESVPLDPSASSASLPL. A compositionally biased stretch (basic and acidic residues) spans 590-599; that stretch reads PDRHSGHKAE.

This sequence belongs to the protein kinase superfamily. Tyr protein kinase family. Insulin receptor subfamily. Tetramer of 2 alpha and 2 beta chains linked by disulfide bonds. The alpha chains contribute to the formation of the ligand-binding domain, while the beta chain carries the kinase domain. Interacts with PIK3R1 and with the PTB/PID domains of IRS1 and SHC1 in vitro when autophosphorylated on tyrosine residues. Forms a hybrid receptor with INSR, the hybrid is a tetramer consisting of 1 alpha chain and 1 beta chain of INSR and 1 alpha chain and 1 beta chain of IGF1R. Interacts with ARRB1 and ARRB2. Interacts with GRB10. Interacts with RACK1. Interacts with SOCS1, SOCS2 and SOCS3. Interacts with 14-3-3 proteins. Interacts with NMD2. Interacts with MAP3K5. Interacts with STAT3. Interacts (nascent precursor form) with ZFAND2B. Autophosphorylated on tyrosine residues in response to ligand binding. Autophosphorylation occurs in trans, i.e. one subunit of the dimeric receptor phosphorylates tyrosine residues on the other subunit. Autophosphorylation occurs in a sequential manner; Tyr-438 is predominantly phosphorylated first, followed by phosphorylation of Tyr-434 and Tyr-439. While every single phosphorylation increases kinase activity, all three tyrosine residues in the kinase activation loop (Tyr-438, Tyr-434 and Tyr-439) have to be phosphorylated for optimal activity. Can be autophosphorylated at additional tyrosine residues (in vitro). Autophosphorylated is followed by phosphorylation of juxtamembrane tyrosines and C-terminal serines. May also be phosphorylated at Tyr-434 and Tyr-439 by mTORC2. Phosphorylation of Tyr-253 is required for IRS1- and SHC1-binding. Phosphorylation of Ser-551 by GSK-3beta restrains kinase activity and promotes cell surface expression, it requires a priming phosphorylation at Ser-555. Dephosphorylated by PTPN1. Post-translationally, polyubiquitinated at Lys-441 and Lys-444 through both 'Lys-48' and 'Lys-29' linkages, promoting receptor endocytosis and subsequent degradation by the proteasome. Ubiquitination is facilitated by pre-existing phosphorylation. In terms of processing, sumoylated with SUMO1. Controlled by regulated intramembrane proteolysis (RIP). Undergoes metalloprotease-dependent constitutive ectodomain shedding to produce a membrane-anchored 52 kDa C-Terminal fragment which is further processed by presenilin gamma-secretase to yield an intracellular 50 kDa fragment.

Its subcellular location is the cell membrane. The catalysed reaction is L-tyrosyl-[protein] + ATP = O-phospho-L-tyrosyl-[protein] + ADP + H(+). Activated by autophosphorylation at Tyr-434, Tyr-438 and Tyr-439 on the kinase activation loop; phosphorylation at all three tyrosine residues is required for optimal kinase activity. Inhibited by MSC1609119A-1, BMS-754807, PQIP, benzimidazole pyridinone, isoquinolinedione, bis-azaindole, 3-cyanoquinoline, 2,4-bis-arylamino-1,3-pyrimidine, pyrrolopyrimidine, pyrrole-5-carboxaldehyde, picropodophyllin (PPP), tyrphostin derivatives. While most inhibitors bind to the ATP binding pocket, MSC1609119A-1 functions as allosteric inhibitor and binds close to the DFG motif and the activation loop. In terms of biological role, receptor tyrosine kinase which mediates actions of insulin-like growth factor 1 (IGF1). Binds IGF1 with high affinity and IGF2 and insulin (INS) with a lower affinity. The activated IGF1R is involved in cell growth and survival control. IGF1R is crucial for tumor transformation and survival of malignant cell. Ligand binding activates the receptor kinase, leading to receptor autophosphorylation, and tyrosines phosphorylation of multiple substrates, that function as signaling adapter proteins including, the insulin-receptor substrates (IRS1/2), Shc and 14-3-3 proteins. Phosphorylation of IRSs proteins lead to the activation of two main signaling pathways: the PI3K-AKT/PKB pathway and the Ras-MAPK pathway. The result of activating the MAPK pathway is increased cellular proliferation, whereas activating the PI3K pathway inhibits apoptosis and stimulates protein synthesis. Phosphorylated IRS1 can activate the 85 kDa regulatory subunit of PI3K (PIK3R1), leading to activation of several downstream substrates, including protein AKT/PKB. AKT phosphorylation, in turn, enhances protein synthesis through mTOR activation and triggers the antiapoptotic effects of IGFIR through phosphorylation and inactivation of BAD. In parallel to PI3K-driven signaling, recruitment of Grb2/SOS by phosphorylated IRS1 or Shc leads to recruitment of Ras and activation of the ras-MAPK pathway. In addition to these two main signaling pathways IGF1R signals also through the Janus kinase/signal transducer and activator of transcription pathway (JAK/STAT). Phosphorylation of JAK proteins can lead to phosphorylation/activation of signal transducers and activators of transcription (STAT) proteins. In particular activation of STAT3, may be essential for the transforming activity of IGF1R. The JAK/STAT pathway activates gene transcription and may be responsible for the transforming activity. JNK kinases can also be activated by the IGF1R. IGF1 exerts inhibiting activities on JNK activation via phosphorylation and inhibition of MAP3K5/ASK1, which is able to directly associate with the IGF1R. When present in a hybrid receptor with INSR, binds IGF1. This is Insulin-like growth factor 1 receptor (IGF1R) from Bos taurus (Bovine).